The primary structure comprises 399 residues: Myb-related transcription factor, partner of profilin (399 aa).

The Myb-like domain maps to 12–84 (TTRLRKPRFS…EVQKRWNDFK (73 aa)). The Nuclear localization signal signature appears at 83-86 (FKRR). Disordered stretches follow at residues 87-108 (TKEKLARVPHSTQGAGPAAEDA), 127-261 (PGAG…PSLD), 297-332 (LLPGTPVDSLPPPLPPPPPPPPPPRPVLPPPAPKVE), and 358-399 (APRS…WKSP). Positions 127 to 136 (PGAGAGAEEP) are enriched in low complexity. Positions 137–149 (PAAPSSQPPPPSA) are enriched in pro residues. Residues 156–170 (LSEDRREDRRADTSA) are compositionally biased toward basic and acidic residues. Composition is skewed to pro residues over residues 219–252 (SPPPPAPPLPPPPPLAQVAPSPPSPPPPPRPPPT), 305–329 (SLPPPLPPPPPPPPPPRPVLPPPAP), and 366–377 (PRPPPAPLPPHD). The segment covering 381 to 399 (HKRRKGFPTRKRRGRWKSP) has biased composition (basic residues). 2 consecutive short sequence motifs (nuclear localization signal) follow at residues 382–385 (KRRK) and 390–393 (RKRR).

Interacts with PFN1. Homodimer and heterodimer with PFN1.

The protein localises to the nucleus. Transcriptional repressor; DNA-binding protein that specifically recognizes the core sequence 5'-YAAC[GT]G-3'. Dimerization with PFN1 reduces its DNA-binding capacity. This is Myb-related transcription factor, partner of profilin (MYPOP) from Homo sapiens (Human).